The primary structure comprises 475 residues: Ribulose bisphosphate carboxylase large chain (475 aa).

A propeptide spanning residues 1–2 (MS) is cleaved from the precursor. An N-acetylproline modification is found at P3. Position 14 is an N6,N6,N6-trimethyllysine (K14). 2 residues coordinate substrate: N123 and T173. K175 serves as the catalytic Proton acceptor. K177 lines the substrate pocket. Residues K201, D203, and E204 each contribute to the Mg(2+) site. N6-carboxylysine is present on K201. The Proton acceptor role is filled by H294. R295, H327, and S379 together coordinate substrate.

This sequence belongs to the RuBisCO large chain family. Type I subfamily. As to quaternary structure, heterohexadecamer of 8 large chains and 8 small chains; disulfide-linked. The disulfide link is formed within the large subunit homodimers. Mg(2+) serves as cofactor. The disulfide bond which can form in the large chain dimeric partners within the hexadecamer appears to be associated with oxidative stress and protein turnover.

It is found in the plastid. Its subcellular location is the chloroplast. The enzyme catalyses 2 (2R)-3-phosphoglycerate + 2 H(+) = D-ribulose 1,5-bisphosphate + CO2 + H2O. The catalysed reaction is D-ribulose 1,5-bisphosphate + O2 = 2-phosphoglycolate + (2R)-3-phosphoglycerate + 2 H(+). In terms of biological role, ruBisCO catalyzes two reactions: the carboxylation of D-ribulose 1,5-bisphosphate, the primary event in carbon dioxide fixation, as well as the oxidative fragmentation of the pentose substrate in the photorespiration process. Both reactions occur simultaneously and in competition at the same active site. In Atriplex rosea (Red orache), this protein is Ribulose bisphosphate carboxylase large chain.